The primary structure comprises 368 residues: Protein HGH1 homolog (368 aa).

It belongs to the HGH1 family.

This Drosophila pseudoobscura pseudoobscura (Fruit fly) protein is Protein HGH1 homolog.